Here is a 106-residue protein sequence, read N- to C-terminus: Toxin-like structure LSTX-D9 (106 aa).

Residues 1–20 form the signal peptide; that stretch reads MMKVLVVVALLLTLIIYSSS. A propeptide spanning residues 21–41 is cleaved from the precursor; sequence DGIDDLEADELVSLMAHEQTR. Cystine bridges form between Cys-45-Cys-60, Cys-52-Cys-69, Cys-59-Cys-85, and Cys-71-Cys-83.

This sequence belongs to the neurotoxin 19 (CSTX) family. 02 (D7) subfamily. In terms of tissue distribution, expressed by the venom gland.

It localises to the secreted. This Lycosa singoriensis (Wolf spider) protein is Toxin-like structure LSTX-D9.